The following is a 346-amino-acid chain: NADH-quinone oxidoreductase subunit H (346 aa).

9 helical membrane passes run 13-33, 51-71, 83-103, 116-136, 162-182, 191-211, 244-264, 278-298, and 310-330; these read ILLILLQCLLLVVPLLVALAF, PNVVGAFGLLQSFADFLKYIV, AVYFLAPIVSLVMALIAWAVI, VAVLYVFAVSSLEVYGVIMGG, IGLIIIGVIISTGSMNFTAIV, LLNWYFLPHFPMLFLFFISAL, FMIGELVAVVLMCALTVLLFF, VFWMILKMLAVFFMFSMVKAI, and LGWKVFLPFSLFWVVFVAFMA.

Belongs to the complex I subunit 1 family. In terms of assembly, NDH-1 is composed of 14 different subunits. Subunits NuoA, H, J, K, L, M, N constitute the membrane sector of the complex.

It is found in the cell inner membrane. The enzyme catalyses a quinone + NADH + 5 H(+)(in) = a quinol + NAD(+) + 4 H(+)(out). Its function is as follows. NDH-1 shuttles electrons from NADH, via FMN and iron-sulfur (Fe-S) centers, to quinones in the respiratory chain. The immediate electron acceptor for the enzyme in this species is believed to be ubiquinone. Couples the redox reaction to proton translocation (for every two electrons transferred, four hydrogen ions are translocated across the cytoplasmic membrane), and thus conserves the redox energy in a proton gradient. This subunit may bind ubiquinone. This chain is NADH-quinone oxidoreductase subunit H, found in Jannaschia sp. (strain CCS1).